Here is a 76-residue protein sequence, read N- to C-terminus: ATP synthase subunit 9, mitochondrial (76 aa).

The next 2 membrane-spanning stretches (helical) occupy residues 10-30 (IGAG…AIVF) and 52-72 (ILGF…SFLL).

This sequence belongs to the ATPase C chain family. F-type ATPases have 2 components, CF(1) - the catalytic core - and CF(0) - the membrane proton channel. CF(1) has five subunits: alpha(3), beta(3), gamma(1), delta(1), epsilon(1). CF(0) has three main subunits: a, b and c.

It is found in the mitochondrion membrane. Mitochondrial membrane ATP synthase (F(1)F(0) ATP synthase or Complex V) produces ATP from ADP in the presence of a proton gradient across the membrane which is generated by electron transport complexes of the respiratory chain. F-type ATPases consist of two structural domains, F(1) - containing the extramembraneous catalytic core and F(0) - containing the membrane proton channel, linked together by a central stalk and a peripheral stalk. During catalysis, ATP synthesis in the catalytic domain of F(1) is coupled via a rotary mechanism of the central stalk subunits to proton translocation. Part of the complex F(0) domain. A homomeric c-ring of probably 10 subunits is part of the complex rotary element. The protein is ATP synthase subunit 9, mitochondrial (ATP9) of Kluyveromyces lactis (strain ATCC 8585 / CBS 2359 / DSM 70799 / NBRC 1267 / NRRL Y-1140 / WM37) (Yeast).